A 314-amino-acid polypeptide reads, in one-letter code: Tudor-interacting repair regulator protein (314 aa).

The N-myristoyl glycine moiety is linked to residue Gly2.

The protein belongs to the Nudix hydrolase family. TIRR subfamily. In terms of assembly, interacts (via the cytoplasmic part) with syndecan-4 (SDC4), but not with other syndecan proteins. Myristoylated in vitro; additional evidence is however required to confirm myristoylation in vivo. As to expression, ubiquitously expressed. Expressed in embryonic brain, eyes, gizzard, heart, intestine, kidney, liver, tibia and skin.

The protein resides in the nucleus. Its subcellular location is the cytoplasm. It localises to the cytoskeleton. The protein localises to the cell membrane. It is found in the cell junction. The protein resides in the focal adhesion. In terms of biological role, key regulator of TP53BP1 required to stabilize TP53BP1 and regulate its recruitment to chromatin. This chain is Tudor-interacting repair regulator protein (NUDT16L1), found in Gallus gallus (Chicken).